We begin with the raw amino-acid sequence, 82 residues long: Transcription elongation factor 1 homolog (82 aa).

Residues cysteine 26, cysteine 29, cysteine 50, and cysteine 53 each contribute to the Zn(2+) site.

It belongs to the ELOF1 family.

It is found in the nucleus. In terms of biological role, transcription elongation factor implicated in the maintenance of proper chromatin structure in actively transcribed regions. This is Transcription elongation factor 1 homolog from Drosophila melanogaster (Fruit fly).